We begin with the raw amino-acid sequence, 226 residues long: MNEIKETPIVILNFKTYLESTGENALKLAKGSEMVAEETGVNIMVHPQYADIYRIAHEVNIPVLAQHIDTIDAGGHTGSILPECVKEAGAVGTLINHSERRVELFEIDAAIKKADSLGLSTVVCTNNIETSSAAATLNPDFVAIEPPELIGSGIPVSKPEPEIVEKTVESIHNINPEVRVLCGAGISTGDDLKAAIDLGSEGVLLASGIILADDPKKALLDLVSKI.

Position 13 to 15 (13 to 15) interacts with substrate; sequence NFK. Residue histidine 97 is the Electrophile of the active site. Glutamate 145 functions as the Proton acceptor in the catalytic mechanism. Substrate-binding positions include isoleucine 150, glycine 185, and 206 to 207; that span reads AS.

Belongs to the triosephosphate isomerase family. As to quaternary structure, homotetramer; dimer of dimers.

It localises to the cytoplasm. It catalyses the reaction D-glyceraldehyde 3-phosphate = dihydroxyacetone phosphate. The protein operates within carbohydrate biosynthesis; gluconeogenesis. It functions in the pathway carbohydrate degradation; glycolysis; D-glyceraldehyde 3-phosphate from glycerone phosphate: step 1/1. Functionally, involved in the gluconeogenesis. Catalyzes stereospecifically the conversion of dihydroxyacetone phosphate (DHAP) to D-glyceraldehyde-3-phosphate (G3P). The protein is Triosephosphate isomerase of Methanobacterium bryantii.